We begin with the raw amino-acid sequence, 874 residues long: Valine--tRNA ligase (874 aa).

Positions 1–22 are disordered; it reads MTENSQQPQPAPSTELPTQYTP. Residues 57 to 67 carry the 'HIGH' region motif; it reads PNVTGSLHLGH. The 'KMSKS' region motif lies at 531–535; it reads KMSKS. K534 is a binding site for ATP. The stretch at 805 to 871 forms a coiled coil; sequence VIDFAAERKR…TRITAQLEKL (67 aa).

It belongs to the class-I aminoacyl-tRNA synthetase family. ValS type 1 subfamily. As to quaternary structure, monomer.

It is found in the cytoplasm. The catalysed reaction is tRNA(Val) + L-valine + ATP = L-valyl-tRNA(Val) + AMP + diphosphate. Catalyzes the attachment of valine to tRNA(Val). As ValRS can inadvertently accommodate and process structurally similar amino acids such as threonine, to avoid such errors, it has a 'posttransfer' editing activity that hydrolyzes mischarged Thr-tRNA(Val) in a tRNA-dependent manner. In Streptomyces coelicolor (strain ATCC BAA-471 / A3(2) / M145), this protein is Valine--tRNA ligase.